A 1114-amino-acid polypeptide reads, in one-letter code: Filamentous growth regulator 23 (1114 aa).

A signal peptide spans 1–21 (MFASYLLLVLWIIRLVPTTHA). Disordered regions lie at residues 232-256 (GSET…PSTT) and 284-314 (SSSI…TSSS). Residues 240-252 (TTAPKPVETPSPE) show a composition bias toward pro residues. N-linked (GlcNAc...) asparagine glycans are attached at residues N382, N397, N475, N490, N506, N539, N565, N591, N637, N687, and N739. The segment at 392–430 (SETTTNESSSYTDEPSSSEEITNTYEPSSSTESSTTDQF) is disordered. The disordered stretch occupies residues 764–784 (TSTLTSSHTSDNEKPASLSSS). N831 carries an N-linked (GlcNAc...) asparagine glycan. Low complexity-rich tracts occupy residues 844–910 (SASS…SSSS) and 922–941 (SSSV…ESSS). Residues 844–963 (SASSSYHSSE…ANENTSEITT (120 aa)) form a disordered region. Residues 942–963 (NGLVSTVTESSTANENTSEITT) are compositionally biased toward polar residues. N-linked (GlcNAc...) asparagine glycans are attached at residues N957, N966, and N1070. N1089 carries the GPI-anchor amidated asparagine lipid modification. Positions 1090–1114 (ANSLGLKNGDNSWIIGIMMIGLLMI) are cleaved as a propeptide — removed in mature form.

The protein localises to the cell membrane. Functionally, putative adhesin which may be involved in cell adhesion and virulence. Involved in the regulation of filamentous growth. The protein is Filamentous growth regulator 23 (FGR23) of Candida albicans (strain SC5314 / ATCC MYA-2876) (Yeast).